Consider the following 128-residue polypeptide: Large ribosomal subunit protein bL17 (128 aa).

It belongs to the bacterial ribosomal protein bL17 family. As to quaternary structure, part of the 50S ribosomal subunit. Contacts protein L32.

This chain is Large ribosomal subunit protein bL17, found in Streptococcus equi subsp. zooepidemicus (strain H70).